The primary structure comprises 149 residues: UPF0260 protein Psyr_1567 (149 aa).

It belongs to the UPF0260 family.

This is UPF0260 protein Psyr_1567 from Pseudomonas syringae pv. syringae (strain B728a).